The chain runs to 241 residues: ATP synthase subunit a (241 aa).

7 helical membrane-spanning segments follow: residues 29-49 (NSSLFMMISVVSVILFLLLGV), 86-106 (IPLVFTVFTFTLSCNLVGMLP), 114-134 (HVIVTFALSMIVFTYTTIVGF), 144-164 (ILLPEGIPSWLAPMMVFIKLF), 177-197 (LAANMIAGHTIIKVVAGFIMN), 200-220 (LILTPIPFLFIIALIGFEVFV), and 221-241 (AILQAYIFTILTCIYLSDAVK).

It belongs to the ATPase A chain family. F-type ATPases have 2 components, CF(1) - the catalytic core - and CF(0) - the membrane proton channel. CF(1) has five subunits: alpha(3), beta(3), gamma(1), delta(1), epsilon(1). CF(0) has three main subunits: a(1), b(2) and c(9-12). The alpha and beta chains form an alternating ring which encloses part of the gamma chain. CF(1) is attached to CF(0) by a central stalk formed by the gamma and epsilon chains, while a peripheral stalk is formed by the delta and b chains.

The protein resides in the cell membrane. Key component of the proton channel; it plays a direct role in the translocation of protons across the membrane. This Wolbachia sp. subsp. Brugia malayi (strain TRS) protein is ATP synthase subunit a.